Reading from the N-terminus, the 507-residue chain is Proton-coupled zinc antiporter SLC30A1 (507 aa).

Residues 1-10 (MGCWGRNRGR) are Cytoplasmic-facing. A helical transmembrane segment spans residues 11–31 (LLCMLALTFMFMVLEVVVSRV). At 32–35 (TSSL) the chain is on the extracellular side. Residues 36-56 (AMLSDSFHMLSDVLALVVALV) traverse the membrane as a helical segment. The Zn(2+) site is built by His-43 and Asp-47. Residues 57-78 (AERFARRTHATQKNTFGWIRAE) lie on the Cytoplasmic side of the membrane. Residues 79–99 (VMGALVNAIFLTGLCFAILLE) form a helical membrane-spanning segment. Over 100 to 113 (AIERFIEPHEMQQP) the chain is Extracellular. The helical transmembrane segment at 114-134 (LVVLGVGVAGLLVNVLGLCLF) threads the bilayer. Residues 135-248 (HHHSGFSQDS…RAGQLNMRGV (114 aa)) lie on the Cytoplasmic side of the membrane. A disordered region spans residues 142–217 (QDSGHGHSHG…DPENPRSGDT (76 aa)). Residues 146–158 (HGHSHGGHGHGHG) are 6 X 2 AA approximate repeats of H-G. Positions 147-167 (GHSHGGHGHGHGLPKGPRVKS) are enriched in basic residues. A compositionally biased stretch (polar residues) spans 189-201 (TNTLVANTSNSNG). A helical membrane pass occupies residues 249-269 (FLHVLGDALGSVIVVVNALVF). Positions 251 and 255 each coordinate Zn(2+). Over 270-308 (YFSWKGCSEGDFCVNPCFPDPCKAFVEIINSTHASVYEA) the chain is Extracellular. The N-linked (GlcNAc...) asparagine glycan is linked to Asn-299. A helical transmembrane segment spans residues 309–329 (GPCWVLYLDPTLCVVMVCILL). Over 330-507 (YTTYPLLKES…MPNKQPESSL (178 aa)) the chain is Cytoplasmic. Phosphoserine is present on Ser-506.

It belongs to the cation diffusion facilitator (CDF) transporter (TC 2.A.4) family. SLC30A subfamily. Homodimer. Interacts with TMEM163. Interacts and forms a complex with TMC6 and TMC8; the interaction regulates zinc transport into the ER. As to quaternary structure, (Microbial infection) Interacts with human papillomavirus 16/HPV16 protein E5; the interaction alleviates SLC30A1-mediated transcription factors inhibition. N-glycosylated at Asn-299. N-glycosylation promotes endocytosis and degradation through the proteasomal or lysosomal pathways.

The protein localises to the cell membrane. It is found in the basolateral cell membrane. Its subcellular location is the cytoplasmic vesicle membrane. It localises to the cytoplasm. The protein resides in the endoplasmic reticulum membrane. The protein localises to the golgi apparatus membrane. It is found in the nucleus membrane. It catalyses the reaction Zn(2+)(in) + 2 H(+)(out) = Zn(2+)(out) + 2 H(+)(in). Its function is as follows. Zinc ion:proton antiporter that could function at the plasma membrane mediating zinc efflux from cells against its electrochemical gradient protecting them from intracellular zinc accumulation and toxicity. Alternatively, could prevent the transport to the plasma membrane of CACNB2, the L-type calcium channels regulatory subunit, through a yet to be defined mechanism. By modulating the expression of these channels at the plasma membrane, could prevent calcium and zinc influx into cells. By the same mechanism, could also prevent L-type calcium channels-mediated heavy metal influx into cells. In some cells, could also function as a zinc ion:proton antiporter mediating zinc entry into the lumen of cytoplasmic vesicles. In macrophages, can increase zinc ions concentration into the lumen of cytoplasmic vesicles containing engulfed bacteria and could help inactivate them. Forms a complex with TMC6/EVER1 and TMC8/EVER2 at the ER membrane of keratynocytes which facilitates zinc uptake into the ER. Down-regulates the activity of transcription factors induced by zinc and cytokines. In Homo sapiens (Human), this protein is Proton-coupled zinc antiporter SLC30A1.